Reading from the N-terminus, the 118-residue chain is Large ribosomal subunit protein bL19 (118 aa).

The protein belongs to the bacterial ribosomal protein bL19 family.

Its function is as follows. This protein is located at the 30S-50S ribosomal subunit interface and may play a role in the structure and function of the aminoacyl-tRNA binding site. The sequence is that of Large ribosomal subunit protein bL19 from Onion yellows phytoplasma (strain OY-M).